We begin with the raw amino-acid sequence, 75 residues long: Probable protein BRICK1-A (75 aa).

Positions 41 to 72 (MSCRSRLATLNEKLTALERRIEYIEARVTKGE) form a coiled coil.

This sequence belongs to the BRK1 family.

It localises to the cytoplasm. Its subcellular location is the cytoskeleton. In terms of biological role, involved in regulation of actin and microtubule organization. Part of a WAVE complex that activates the Arp2/3 complex. The protein is Probable protein BRICK1-A (brk1-a) of Xenopus laevis (African clawed frog).